We begin with the raw amino-acid sequence, 117 residues long: Immunoglobulin kappa variable 1-33 (117 aa).

An N-terminal signal peptide occupies residues 1-22 (MDMRVPAQLLGLLLLWLSGARC). Residues 23–45 (DIQMTQSPSSLSASVGDRVTITC) are framework-1. The region spanning 24–117 (IQMTQSPSSL…YYCQQYDNLP (94 aa)) is the Ig-like domain. Cysteines 45 and 110 form a disulfide. The complementarity-determining-1 stretch occupies residues 46–56 (QASQDISNYLN). The framework-2 stretch occupies residues 57 to 71 (WYQQKPGKAPKLLIY). The tract at residues 72–78 (DASNLET) is complementarity-determining-2. Positions 79–110 (GVPSRFSGSGSGTDFTFTISSLQPEDIATYYC) are framework-3. The interval 111 to 117 (QQYDNLP) is complementarity-determining-3.

Immunoglobulins are composed of two identical heavy chains and two identical light chains; disulfide-linked.

Its subcellular location is the secreted. It localises to the cell membrane. Functionally, v region of the variable domain of immunoglobulin light chains that participates in the antigen recognition. Immunoglobulins, also known as antibodies, are membrane-bound or secreted glycoproteins produced by B lymphocytes. In the recognition phase of humoral immunity, the membrane-bound immunoglobulins serve as receptors which, upon binding of a specific antigen, trigger the clonal expansion and differentiation of B lymphocytes into immunoglobulins-secreting plasma cells. Secreted immunoglobulins mediate the effector phase of humoral immunity, which results in the elimination of bound antigens. The antigen binding site is formed by the variable domain of one heavy chain, together with that of its associated light chain. Thus, each immunoglobulin has two antigen binding sites with remarkable affinity for a particular antigen. The variable domains are assembled by a process called V-(D)-J rearrangement and can then be subjected to somatic hypermutations which, after exposure to antigen and selection, allow affinity maturation for a particular antigen. The polypeptide is Immunoglobulin kappa variable 1-33 (Homo sapiens (Human)).